A 167-amino-acid chain; its full sequence is NADH-ubiquinone oxidoreductase chain 6 (167 aa).

The next 4 helical transmembrane spans lie at 21-41, 45-65, 78-98, and 132-152; these read SPYYGALATAWLALLAALLLL, IIFPAIILMLIYLGGMLVVFI, PINLTMSALMASFGVMLITMI, and SMFIVAVMILTALLFSILEVV.

This sequence belongs to the complex I subunit 6 family.

It is found in the mitochondrion membrane. It catalyses the reaction a ubiquinone + NADH + 5 H(+)(in) = a ubiquinol + NAD(+) + 4 H(+)(out). Its function is as follows. Core subunit of the mitochondrial membrane respiratory chain NADH dehydrogenase (Complex I) that is believed to belong to the minimal assembly required for catalysis. Complex I functions in the transfer of electrons from NADH to the respiratory chain. The immediate electron acceptor for the enzyme is believed to be ubiquinone. This chain is NADH-ubiquinone oxidoreductase chain 6 (ND6), found in Branchiostoma floridae (Florida lancelet).